A 328-amino-acid polypeptide reads, in one-letter code: Malate dehydrogenase (328 aa).

11-17 is an NAD(+) binding site; the sequence is GAAGQIG. 2 residues coordinate substrate: arginine 94 and arginine 100. NAD(+) contacts are provided by residues asparagine 107, glutamine 114, and 131-133; that span reads VGN. Substrate is bound by residues asparagine 133 and arginine 164. Histidine 189 functions as the Proton acceptor in the catalytic mechanism.

Belongs to the LDH/MDH superfamily. MDH type 2 family.

The enzyme catalyses (S)-malate + NAD(+) = oxaloacetate + NADH + H(+). In terms of biological role, catalyzes the reversible oxidation of malate to oxaloacetate. The sequence is that of Malate dehydrogenase from Xanthomonas oryzae pv. oryzae (strain MAFF 311018).